The chain runs to 149 residues: Nucleoside deoxyribosyltransferase (149 aa).

Glutamate 90 serves as the catalytic Nucleophile.

The protein belongs to the nucleoside deoxyribosyltransferase family.

The enzyme catalyses 2-deoxy-D-ribosyl-base(1) + base(2) = 2-deoxy-D-ribosyl-base(2) + base(1).. Its pathway is nucleotide metabolism; nucleotide salvage pathway. In terms of biological role, catalyzes the cleavage of the glycosidic bond of 2'-deoxyribonucleosides and the transfer of the deoxyribosyl moiety to an acceptor purine or pyrimidine base. This chain is Nucleoside deoxyribosyltransferase (ntd), found in Lactobacillus johnsonii (strain CNCM I-12250 / La1 / NCC 533).